A 311-amino-acid polypeptide reads, in one-letter code: D-allose-binding periplasmic protein (311 aa).

An N-terminal signal peptide occupies residues 1 to 23; sequence MNKYLKYFSGTLVGLMLSTSAFA.

The protein belongs to the bacterial solute-binding protein 2 family.

The protein localises to the periplasm. In terms of biological role, part of the binding-protein-dependent transport system AlsBAC for D-allose. In Escherichia coli (strain K12), this protein is D-allose-binding periplasmic protein (alsB).